Consider the following 276-residue polypeptide: Formamidopyrimidine-DNA glycosylase (276 aa).

Pro2 (schiff-base intermediate with DNA) is an active-site residue. Glu3 acts as the Proton donor in catalysis. Lys60 acts as the Proton donor; for beta-elimination activity in catalysis. Residues His93 and Arg112 each coordinate DNA. Residues 240–274 form an FPG-type zinc finger; sequence NVYGKKGEPCVTCGTILEKTVVGGRGTHYCPICQP. Arg264 (proton donor; for delta-elimination activity) is an active-site residue.

The protein belongs to the FPG family. In terms of assembly, monomer. Zn(2+) is required as a cofactor.

The enzyme catalyses Hydrolysis of DNA containing ring-opened 7-methylguanine residues, releasing 2,6-diamino-4-hydroxy-5-(N-methyl)formamidopyrimidine.. It catalyses the reaction 2'-deoxyribonucleotide-(2'-deoxyribose 5'-phosphate)-2'-deoxyribonucleotide-DNA = a 3'-end 2'-deoxyribonucleotide-(2,3-dehydro-2,3-deoxyribose 5'-phosphate)-DNA + a 5'-end 5'-phospho-2'-deoxyribonucleoside-DNA + H(+). Its function is as follows. Involved in base excision repair of DNA damaged by oxidation or by mutagenic agents. Acts as a DNA glycosylase that recognizes and removes damaged bases. Has a preference for oxidized purines, such as 7,8-dihydro-8-oxoguanine (8-oxoG). Has AP (apurinic/apyrimidinic) lyase activity and introduces nicks in the DNA strand. Cleaves the DNA backbone by beta-delta elimination to generate a single-strand break at the site of the removed base with both 3'- and 5'-phosphates. This Bacillus cereus (strain ATCC 10987 / NRS 248) protein is Formamidopyrimidine-DNA glycosylase.